The sequence spans 357 residues: Acyl-coenzyme A:6-aminopenicillanic-acid-acyltransferase 40 kDa form (357 aa).

The 6-aminopenicillanate site is built by aspartate 121 and arginine 310.

It belongs to the peptidase C45 family. In terms of assembly, the active form of the enzyme results from processing of the 40-kDa monomeric precursor to a heterodimer containing subunits of 11 and 29 kDa. Post-translationally, the pre-AAT protein is synthesized as 40 kDa precursor which is then self-processed into an 11 kDa (protein A) and a 29 kDa (protein B). The B protein carries AAT activity.

Its subcellular location is the peroxisome matrix. It catalyses the reaction isopenicillin N + phenylacetyl-CoA + H2O = penicillin G + L-2-aminoadipate + CoA + H(+). It functions in the pathway antibiotic biosynthesis; penicillin G biosynthesis; penicillin G from L-alpha-aminoadipate and L-cysteine and L-valine: step 3/3. In terms of biological role, nonribosomal peptide synthetase; part of the gene cluster that mediates the biosynthesis of penicillin, the world's most important antibiotic. AatA catalyzes the exchange of the alpha-aminoadipyl side chain of isopenicillin N for phenylacetic acid to yield penicillin. This step occurs in the peroxisomal matrix and the penM and paaT transporters are involved in the isopenicillin N and phenylacetic acid import into the peroxisome, respectively. The penicillin biosynthesis occurs via 3 enzymatic steps, the first corresponding to the production of the tripeptide N-[(5S)-5-amino-5-carboxypentanoyl]-L-cysteinyl-D-valine (LLD-ACV or ACV) by the NRPS acvA. The tripeptide ACV is then cyclized to isopenicillin N (IPN) by the isopenicillin N synthase ipnA that forms the beta-lactam nucleus. Finally, the alpha-aminoadipyl side chain is exchanged for phenylacetic acid by the isopenicillin N acyltransferase penDE to yield penicillin in the peroxisomal matrix. This is Acyl-coenzyme A:6-aminopenicillanic-acid-acyltransferase 40 kDa form from Emericella nidulans (strain FGSC A4 / ATCC 38163 / CBS 112.46 / NRRL 194 / M139) (Aspergillus nidulans).